Consider the following 186-residue polypeptide: Negative modulator of initiation of replication (186 aa).

Belongs to the SeqA family. As to quaternary structure, homodimer. Polymerizes to form helical filaments.

It is found in the cytoplasm. In terms of biological role, negative regulator of replication initiation, which contributes to regulation of DNA replication and ensures that replication initiation occurs exactly once per chromosome per cell cycle. Binds to pairs of hemimethylated GATC sequences in the oriC region, thus preventing assembly of replication proteins and re-initiation at newly replicated origins. Repression is relieved when the region becomes fully methylated. This is Negative modulator of initiation of replication from Glaesserella parasuis serovar 5 (strain SH0165) (Haemophilus parasuis).